The primary structure comprises 759 residues: DNA topoisomerase 3 (759 aa).

The Toprim domain maps to 3–147 (RALFVAEKND…RLDIFRARFS (145 aa)). In terms of domain architecture, Topo IA-type catalytic spans 165 to 590 (DEKTVAAVDC…EQIGKYRAIF (426 aa)). Tyrosine 334 acts as the O-(5'-phospho-DNA)-tyrosine intermediate in catalysis. A disordered region spans residues 609–715 (DKNNQAGGGP…KEQEEEEEVF (107 aa)). The segment covering 614–639 (AGGGPGGPGGGGGPPRGPGGGGGGGP) has biased composition (gly residues). Positions 640–649 (TGPPAPPKPP) are enriched in pro residues. Zn(2+) contacts are provided by cysteine 716, cysteine 718, cysteine 743, and cysteine 753. Residues 716-759 (CQCPEPMRAVTKVVQKEGPNKGKKFYTCSLPYTSSEKCNFFKWA) form a GRF-type zinc finger.

The protein belongs to the type IA topoisomerase family. In terms of assembly, component of the BTR double Holliday Junction dissolution complex composed of at least him-6, top-3, rmh-1 and rmif-2, which is involved in double strand break repair in the germline. May interact with rmh-1.

It is found in the nucleus. It carries out the reaction ATP-independent breakage of single-stranded DNA, followed by passage and rejoining.. Functionally, component of the BTR double Holliday Junction dissolution complex, which is involved in homologous recombination during meiotic double strand break in the germline. Releases the supercoiling and torsional tension of DNA introduced during the DNA replication and transcription by transiently cleaving and rejoining one strand of the DNA duplex. Introduces a single-strand break via transesterification at a target site in duplex DNA. The scissile phosphodiester is attacked by the catalytic tyrosine of the enzyme, resulting in the formation of a DNA-(5'-phosphotyrosyl)-enzyme intermediate and the expulsion of a 3'-OH DNA strand. The free DNA strand than undergoes passage around the unbroken strand thus removing DNA supercoils. Finally, in the religation step, the DNA 3'-OH attacks the covalent intermediate to expel the active-site tyrosine and restore the DNA phosphodiester backbone. The polypeptide is DNA topoisomerase 3 (Caenorhabditis elegans).